Reading from the N-terminus, the 402-residue chain is CCA-adding enzyme (402 aa).

The ATP site is built by G32 and R35. The CTP site is built by G32 and R35. The Mg(2+) site is built by D45 and D47. 5 residues coordinate ATP: R116, D159, R162, R165, and R168. Positions 116, 159, 162, 165, and 168 each coordinate CTP.

This sequence belongs to the tRNA nucleotidyltransferase/poly(A) polymerase family. Bacterial CCA-adding enzyme type 3 subfamily. Homodimer. Requires Mg(2+) as cofactor.

It carries out the reaction a tRNA precursor + 2 CTP + ATP = a tRNA with a 3' CCA end + 3 diphosphate. It catalyses the reaction a tRNA with a 3' CCA end + 2 CTP + ATP = a tRNA with a 3' CCACCA end + 3 diphosphate. Catalyzes the addition and repair of the essential 3'-terminal CCA sequence in tRNAs without using a nucleic acid template. Adds these three nucleotides in the order of C, C, and A to the tRNA nucleotide-73, using CTP and ATP as substrates and producing inorganic pyrophosphate. tRNA 3'-terminal CCA addition is required both for tRNA processing and repair. Also involved in tRNA surveillance by mediating tandem CCA addition to generate a CCACCA at the 3' terminus of unstable tRNAs. While stable tRNAs receive only 3'-terminal CCA, unstable tRNAs are marked with CCACCA and rapidly degraded. The chain is CCA-adding enzyme from Streptococcus agalactiae serotype III (strain NEM316).